The chain runs to 492 residues: NADH-quinone oxidoreductase subunit N (492 aa).

Transmembrane regions (helical) follow at residues 18 to 38, 45 to 65, 80 to 100, 108 to 128, 133 to 153, 167 to 187, 209 to 229, 250 to 270, 277 to 297, 305 to 325, 333 to 353, 381 to 401, 415 to 435, and 464 to 484; these read ILPM…NAFT, LNMF…LGLE, LSLV…FLAL, FQTA…QFMV, LLLM…LMAL, FTMG…FYLL, MLFA…VSLV, ISIV…GAFI, VEDI…LIAL, MLAY…FIHT, FVYW…LWLL, VAIL…FSVF, NHIL…FYYF, and MPIY…VFMM.

The protein belongs to the complex I subunit 2 family. In terms of assembly, NDH-1 is composed of 14 different subunits. Subunits NuoA, H, J, K, L, M, N constitute the membrane sector of the complex.

It is found in the cell inner membrane. It catalyses the reaction a quinone + NADH + 5 H(+)(in) = a quinol + NAD(+) + 4 H(+)(out). Functionally, NDH-1 shuttles electrons from NADH, via FMN and iron-sulfur (Fe-S) centers, to quinones in the respiratory chain. The immediate electron acceptor for the enzyme in this species is believed to be ubiquinone. Couples the redox reaction to proton translocation (for every two electrons transferred, four hydrogen ions are translocated across the cytoplasmic membrane), and thus conserves the redox energy in a proton gradient. The sequence is that of NADH-quinone oxidoreductase subunit N from Helicobacter acinonychis (strain Sheeba).